The following is a 141-amino-acid chain: ATP synthase epsilon chain (141 aa).

Belongs to the ATPase epsilon chain family. F-type ATPases have 2 components, CF(1) - the catalytic core - and CF(0) - the membrane proton channel. CF(1) has five subunits: alpha(3), beta(3), gamma(1), delta(1), epsilon(1). CF(0) has three main subunits: a, b and c.

It localises to the cell inner membrane. Functionally, produces ATP from ADP in the presence of a proton gradient across the membrane. This is ATP synthase epsilon chain from Burkholderia cenocepacia (strain ATCC BAA-245 / DSM 16553 / LMG 16656 / NCTC 13227 / J2315 / CF5610) (Burkholderia cepacia (strain J2315)).